The chain runs to 432 residues: Adenylosuccinate synthetase (432 aa).

GTP contacts are provided by residues 13 to 19 (GDEGKGK) and 41 to 43 (GHT). Aspartate 14 (proton acceptor) is an active-site residue. Residues aspartate 14 and glycine 41 each contribute to the Mg(2+) site. Residues 14 to 17 (DEGK), 39 to 42 (NAGH), threonine 130, arginine 144, glutamine 225, threonine 240, and arginine 304 each bind IMP. Histidine 42 acts as the Proton donor in catalysis. Substrate is bound at residue 300-306 (STTGRRR). GTP is bound by residues arginine 306, 332 to 334 (KID), and 415 to 417 (STG).

It belongs to the adenylosuccinate synthetase family. In terms of assembly, homodimer. Mg(2+) is required as a cofactor.

It localises to the cytoplasm. It catalyses the reaction IMP + L-aspartate + GTP = N(6)-(1,2-dicarboxyethyl)-AMP + GDP + phosphate + 2 H(+). It participates in purine metabolism; AMP biosynthesis via de novo pathway; AMP from IMP: step 1/2. In terms of biological role, plays an important role in the de novo pathway of purine nucleotide biosynthesis. Catalyzes the first committed step in the biosynthesis of AMP from IMP. The sequence is that of Adenylosuccinate synthetase from Blochmanniella pennsylvanica (strain BPEN).